Reading from the N-terminus, the 1843-residue chain is Xin actin-binding repeat-containing protein 1 (1843 aa).

Positions 1-10 (MADTQTQVAP) are enriched in polar residues. A disordered region spans residues 1-48 (MADTQTQVAPTPTMRMATAEDLPLPPPPALEDLPLPPPKESFSKFHQQ). Residues 1-54 (MADTQTQVAPTPTMRMATAEDLPLPPPPALEDLPLPPPKESFSKFHQQRQASEL) form an interaction with VASP region. Residues 23–39 (PLPPPPALEDLPLPPPK) are compositionally biased toward pro residues. Xin repeat units lie at residues 89 to 104 (GDVQCMRWIFENWRLD), 121 to 136 (GDVQATSRKFEEGSFA), 151 to 166 (GDVRAARWLFETKPLD), and 186 to 201 (GDVQGTRMLFETRPLD). The disordered stretch occupies residues 132 to 151 (EGSFANSTDQEPTRPQPGGG). Ser205, Ser208, and Ser213 each carry phosphoserine. 2 Xin repeats span residues 226-241 (GDVKKTVKLFQTEPLC) and 264-279 (NAVRSARWLFETRPLD). Ser295 is modified (phosphoserine). One copy of the Xin 7 repeat lies at 302–317 (PDVSATRWIFETQPLD). Ser332 carries the post-translational modification Phosphoserine. Xin repeat units lie at residues 340 to 355 (PDVQQQQHLFETRALD) and 376 to 391 (GDVRSTLWLFETKPLD). Positions 406–432 (DPQDGEGHLSSDSSSALPFSQSAPQRD) are disordered. Residues 415–429 (SSDSSSALPFSQSAP) are compositionally biased toward low complexity. The stretch at 436–451 (GDVKTFKNLFETLPLD) is one Xin 10 repeat. Positions 455–479 (QGEVLAHGSPSREEGTDSAGQAQGI) are disordered. Xin repeat units follow at residues 507 to 522 (GDVQGYRWMFETQPLD) and 545 to 560 (GDVGTARWLFETQPLE). The segment at 531 to 632 (IDVVRGITRQ…AQSCTWMFKP (102 aa)) is interaction with CTNNB1. Residues 564-577 (QREQQERQKEEGKS) show a composition bias toward basic and acidic residues. The interval 564–591 (QREQQERQKEEGKSQGDPQPEAPPKGDV) is disordered. Xin repeat units lie at residues 589–604 (GDVQTIRWLFETCPMS), 621–636 (AEAQSCTWMFKPQPVD), 654–669 (GERQTDRHVFETEPLQ), 691–706 (GQVSRQKEVFQALEAG), and 723–738 (GSVHKFTWLFENCPMG). 5 disordered regions span residues 943–999 (SLRW…QAIG), 1063–1205 (AEAQ…MAWG), 1238–1277 (SGPQAAGASPHPHNAFVPPPPTLPAAVTGPDFPAGAHRAE), 1289–1471 (DPLL…QKEL), and 1561–1696 (MSSL…DVSV). Composition is skewed to polar residues over residues 1064–1073 (EAQSLHQQVL) and 1080–1089 (PTPTATSNPI). The segment covering 1294 to 1311 (SHSSPAGQRTPGGSQTKT) has biased composition (polar residues). Over residues 1357–1368 (GQREHQRGERDT) the composition is skewed to basic and acidic residues. Over residues 1393–1424 (GHSQPSLQHGLSTTAPRPTKNQATGSNAQSSE) the composition is skewed to polar residues. Residues 1462–1490 (DSLQRNQKELQGLLNQVQALEKEAASSVD) adopt a coiled-coil conformation. 2 stretches are compositionally biased toward polar residues: residues 1588–1600 (VTVSSSARPSGSG) and 1663–1679 (SRDSPSSPTFISIQSAT). The segment at 1685 to 1843 (TPSFKGNPDV…SCSYSQPAAQ (159 aa)) is interaction with FLNC.

The protein belongs to the Xin family. In terms of assembly, interacts (via N-terminus) with CTTN; the interaction promotes CTTN localization to intercalated disks in cardiomyocytes. Interacts with CTNNB1. Interacts with FLNC and VASP. Interacts with F-actin. In terms of tissue distribution, expressed in skeletal muscle at areas of Z-disk disruption in a longitudinal pattern spanning one or more sarcomeres (at protein level). Expressed in the heart (at protein level). As to expression, expressed in the heart.

It localises to the cell junction. The protein resides in the adherens junction. The protein localises to the desmosome. Its function is as follows. Protects actin filaments from depolymerization. Required for correct cardiac intercalated disk ultrastructure via maintenance of cell-cell adhesion stability, and as a result maintains cardiac organ morphology, conductance and heart beat rhythm. Required for development of normal skeletal muscle morphology and muscle fiber type composition. Plays a role in regulating muscle satellite cell activation and survival, as a result promotes muscle fiber recovery from injury and fatigue. In Homo sapiens (Human), this protein is Xin actin-binding repeat-containing protein 1.